Reading from the N-terminus, the 270-residue chain is Putative phosphoenolpyruvate synthase regulatory protein (270 aa).

An ADP-binding site is contributed by 150 to 157; the sequence is GVSRCGKT.

It belongs to the pyruvate, phosphate/water dikinase regulatory protein family. PSRP subfamily.

The catalysed reaction is [pyruvate, water dikinase] + ADP = [pyruvate, water dikinase]-phosphate + AMP + H(+). It carries out the reaction [pyruvate, water dikinase]-phosphate + phosphate + H(+) = [pyruvate, water dikinase] + diphosphate. Bifunctional serine/threonine kinase and phosphorylase involved in the regulation of the phosphoenolpyruvate synthase (PEPS) by catalyzing its phosphorylation/dephosphorylation. This is Putative phosphoenolpyruvate synthase regulatory protein from Shewanella loihica (strain ATCC BAA-1088 / PV-4).